Reading from the N-terminus, the 211-residue chain is Abscisic acid receptor PYL7 (211 aa).

Residues 29-180 form an START-like region; sequence HHCRENQCTS…NLKSLACVSE (152 aa). Intrachain disulfides connect Cys-31–Cys-161 and Cys-36–Cys-161. Abscisate-binding positions include Lys-65, 93–98, 120–126, and Glu-145; these read ATTSTE and RLKNYSS. Positions 89–93 match the Gate loop motif; sequence SGLPA. Positions 119–121 match the Latch loop motif; the sequence is HRL.

This sequence belongs to the PYR/PYL/RCAR abscisic acid intracellular receptor family. In terms of assembly, homodimer. Binds ABA on one subunit only. Binds to CARs protein in an ABA-independent manner, both at the plasma membrane and in the nucleus. Interacts with ABI1, and possibly with other PP2Cs.

The protein resides in the cytoplasm. The protein localises to the nucleus. It localises to the cell membrane. Functionally, receptor for abscisic acid (ABA) required for ABA-mediated responses such as stomatal closure and germination inhibition. Inhibits the activity of group-A protein phosphatases type 2C (PP2Cs) when activated by ABA. This Arabidopsis thaliana (Mouse-ear cress) protein is Abscisic acid receptor PYL7 (PYL7).